Reading from the N-terminus, the 265-residue chain is Synaptoporin (265 aa).

Residues 1–4 lie on the Cytoplasmic side of the membrane; that stretch reads MCMV. An MARVEL domain is found at 1–202; the sequence is MCMVIFAPLF…NIWFVFKETG (202 aa). The chain crosses the membrane as a helical span at residues 5–25; it reads IFAPLFAIFAFATCGGYSGGL. At 26 to 81 the chain is on the vesicular side; sequence RLSVDCVNKTESNLSIDIAFAYPFRLHQVTFEVPTCEGKERQKLALIGDSSSSAEF. N-linked (GlcNAc...) asparagine glycans are attached at residues N33 and N38. The helical transmembrane segment at 82–102 threads the bilayer; that stretch reads FVTVAVFAFLYSLAATVVYIF. Residues 103–114 lie on the Cytoplasmic side of the membrane; the sequence is FQNKYRENNRGP. The chain crosses the membrane as a helical span at residues 115-135; it reads LIDFIVTVVFSFLWLVGSSAW. Over 136–177 the chain is Vesicular; sequence AKGLSDVKVATDPKEVLLLMSACKQPSNKCMAIHSPVMSSLN. A helical transmembrane segment spans residues 178-198; that stretch reads TSVVFGFLNFILWAGNIWFVF. At 199–265 the chain is on the cytoplasmic side; sequence KETGWHSSGQ…TGPTSFTNQI (67 aa). 5 repeat units span residues 210 to 214, 222 to 226, 227 to 231, 232 to 236, and 238 to 242. The 5 X approximate repeats stretch occupies residues 210 to 242; the sequence is YLSDPMEKHSSSYNQGGYNQDSYGSSSGYSQQA. The residue at position 212 (S212) is a Phosphoserine. Positions 221 to 265 are disordered; sequence SYNQGGYNQDSYGSSSGYSQQASLGPTSDEFGQQPTGPTSFTNQI. The span at 224–243 shows a compositional bias: low complexity; it reads QGGYNQDSYGSSSGYSQQAS. Over residues 244 to 265 the composition is skewed to polar residues; it reads LGPTSDEFGQQPTGPTSFTNQI.

It belongs to the synaptophysin/synaptobrevin family.

Its subcellular location is the cytoplasmic vesicle. The protein localises to the secretory vesicle. It localises to the synaptic vesicle membrane. It is found in the synapse. The protein resides in the synaptosome. Its function is as follows. Intrinsic membrane protein of small synaptic vesicles. Probable vesicular channel protein. This Homo sapiens (Human) protein is Synaptoporin (SYNPR).